The following is a 477-amino-acid chain: Calcium uptake protein 1, mitochondrial (477 aa).

The transit peptide at 1–33 (MFRLNALSALAELAVGSRWYHGTSQPTQTKRRL) directs the protein to the mitochondrion. Residues 55-108 (AHAESPPSVNSKKTDAGDKGKSKDTREVSSHEGSAADTAAEPYPEEKKKKRSGF) are disordered. Positions 66-84 (KKTDAGDKGKSKDTREVSS) are enriched in basic and acidic residues. The segment at 101–112 (KKKKRSGFRDRK) is polybasic region. S124 is modified (phosphoserine). The interval 128 to 131 (KIFR) is k/R-ring. The region spanning 220–255 (TPQRNFEIAFKMFDLNGDGEVDMEEFEQVQSIIRSQ) is the EF-hand 1 domain. 5 residues coordinate Ca(2+): D233, N235, D237, E239, and E244. The interval 261 to 265 (RHRDR) is k/R-ring. Residues 356-376 (KDGKGLTFQEVENFFTFLKNI) form the EF-hand 2; degenerate domain. An EF-hand 3 domain is found at 410–445 (LSDHVCDVVFALFDCDGNGELSNKEFVSIMKQRLMR). Residues D423, D425, N427, E429, and E434 each contribute to the Ca(2+) site. R457 is subject to Asymmetric dimethylarginine. Residues 457-467 (RLMQAMWKCAQ) form a C-helix region region.

It belongs to the MICU1 family. MICU1 subfamily. Heterodimer; disulfide-linked; heterodimerizes with MICU2 or MICU3. Homodimer; disulfide-linked. Component of the uniplex complex, composed of MCU, EMRE/SMDT1, MICU1 and MICU2 (or MICU3) in a 4:4:1:1 stoichiometry. The composition of calcium sensors within the uniplex complex can differ depending on tissues: a MICU1 homodimer can be present instead of the MICU1-MICU2 heterodimer in skeletal-muscle and kidney. MICU1 is recruited to the uniplex complex by EMRE/SMDT1, and it associates with MCU at low calcium levels, occluding the pore of the MCU channel. Associates with the MICOS complex. Interacts with SLC25A23. Interacts with CHCHD4/MIA40; which introduces the interchain disulfide bond with MICU2. Interacts (when methylated) with UCP2; leading to decrease the calcium sensitivity of MICU1. Post-translationally, phosphorylation at Ser-124 by AKT1 impairs its maturation and stability. Asymmetric dimethylation at Arg-457 by PRMT1 decreases the calcium sensitivity of MICU1 by promoting interaction with UCP2. In terms of processing, degraded by YME1L1 when not complexed as homodimer or heterodimer. Not degraded when complexed as homodimer or heterodimer; the presence of the interchain disulfide bond protecting MICU1 from degradation by YME1L1.

The protein localises to the mitochondrion intermembrane space. The protein resides in the mitochondrion inner membrane. Its function is as follows. Calcium sensor of the mitochondrial calcium uniporter (MCU) channel, which senses calcium level via its EF-hand domains. MICU1 and MICU2 (or MICU3) form a disulfide-linked heterodimer that stimulates and inhibits MCU activity, depending on the concentration of calcium. At low calcium levels, MICU1 occludes the pore of the MCU channel, preventing mitochondrial calcium uptake. At higher calcium levels, calcium-binding to MICU1 and MICU2 (or MICU3) induces a conformational change that weakens MCU-MICU1 interactions and moves the MICU1-MICU2 heterodimer away from the pore, allowing calcium permeation through the MCU channel. Also required to protect against manganese toxicity by preventing manganese uptake by MCU: mechanistically, manganese-binding to its EF-hand domains does not induce any conformational change, maintaining MCU pore occlusion. Acts as a regulator of mitochondrial cristae structure independently of its ability to regulate the mitochondrial calcium uniporter channel. Regulates glucose-dependent insulin secretion in pancreatic beta-cells by regulating mitochondrial calcium uptake. Induces T-helper 1-mediated autoreactivity, which is accompanied by the release of IFNG. The sequence is that of Calcium uptake protein 1, mitochondrial (Micu1) from Rattus norvegicus (Rat).